The following is a 542-amino-acid chain: T-complex protein 1 subunit delta (542 aa).

Low complexity predominate over residues 1-16 (MPENVAPRTGPPAGAA). The segment at 1-31 (MPENVAPRTGPPAGAAGAAGGRGKSAYQDRD) is disordered. Arg-22 carries the post-translational modification Omega-N-methylarginine. Residue Lys-24 is modified to N6-acetyllysine. Ser-39 is modified (phosphoserine). Gly-56 is a binding site for ADP. Gly-56 is a binding site for ATP. Residue Asp-107 coordinates Mg(2+). ADP-binding residues include Gly-108, Thr-109, Thr-110, Ser-111, Asn-175, Ser-176, and Lys-177. Residues Gly-108 and Thr-109 each coordinate ATP. Residue Lys-177 coordinates ATP. Ser-187 and Ser-205 each carry phosphoserine. An N6-acetyllysine mark is found at Lys-291, Lys-305, Lys-322, and Lys-329. ADP is bound at residue Gly-428. At Ser-447 the chain carries Phosphoserine. An ADP-binding site is contributed by Gln-513.

It belongs to the TCP-1 chaperonin family. As to quaternary structure, component of the chaperonin-containing T-complex (TRiC), a hexadecamer composed of two identical back-to-back stacked rings enclosing a protein folding chamber. Each ring is made up of eight different subunits: TCP1/CCT1, CCT2, CCT3, CCT4, CCT5, CCT6A/CCT6, CCT7, CCT8. Interacts with PACRG. Interacts with DNAAF4. Interacts with DLEC1.

Its subcellular location is the cytoplasm. It is found in the melanosome. The protein resides in the cytoskeleton. The protein localises to the microtubule organizing center. It localises to the centrosome. Its subcellular location is the cilium basal body. It catalyses the reaction ATP + H2O = ADP + phosphate + H(+). Component of the chaperonin-containing T-complex (TRiC), a molecular chaperone complex that assists the folding of actin, tubulin and other proteins upon ATP hydrolysis. The TRiC complex mediates the folding of WRAP53/TCAB1, thereby regulating telomere maintenance. As part of the TRiC complex may play a role in the assembly of BBSome, a complex involved in ciliogenesis regulating transports vesicles to the cilia. This is T-complex protein 1 subunit delta (CCT4) from Bos taurus (Bovine).